Reading from the N-terminus, the 118-residue chain is Succinate dehydrogenase assembly factor 4, mitochondrial (118 aa).

The transit peptide at 1–30 (MQSVTRQTARVLPQMGKQVSYLSTSGAWRA) directs the protein to the mitochondrion. The segment at 65–118 (GKLDEFSRHPYQEKEPLKPWPNQTNPYTGEIGGPAGPEPTRYGDWERKGRVSDF) is disordered. Basic and acidic residues-rich tracts occupy residues 66–81 (KLDE…KEPL) and 105–118 (RYGD…VSDF).

Belongs to the SDHAF4 family. As to quaternary structure, interacts with SdhA in its FAD-bound form.

The protein localises to the mitochondrion matrix. In terms of biological role, plays an essential role in the assembly of succinate dehydrogenase (SDH), an enzyme complex (also referred to as respiratory complex II) that is a component of both the tricarboxylic acid (TCA) cycle and the mitochondrial electron transport chain, and which couples the oxidation of succinate to fumarate with the reduction of ubiquinone (coenzyme Q) to ubiquinol. Binds to the flavoprotein subunit SdhA in its FAD-bound form, blocking the generation of excess reactive oxygen species (ROS) and facilitating its assembly with the iron-sulfur protein subunit SdhB into the SDH catalytic dimer. This is Succinate dehydrogenase assembly factor 4, mitochondrial from Drosophila melanogaster (Fruit fly).